The following is a 364-amino-acid chain: Ribosomal RNA large subunit methyltransferase M (364 aa).

S-adenosyl-L-methionine is bound by residues serine 198, 231–234, aspartate 250, aspartate 270, and aspartate 286; that span reads APGG. Lysine 315 acts as the Proton acceptor in catalysis.

This sequence belongs to the class I-like SAM-binding methyltransferase superfamily. RNA methyltransferase RlmE family. RlmM subfamily. As to quaternary structure, monomer.

The protein localises to the cytoplasm. It carries out the reaction cytidine(2498) in 23S rRNA + S-adenosyl-L-methionine = 2'-O-methylcytidine(2498) in 23S rRNA + S-adenosyl-L-homocysteine + H(+). Functionally, catalyzes the 2'-O-methylation at nucleotide C2498 in 23S rRNA. This chain is Ribosomal RNA large subunit methyltransferase M, found in Azoarcus sp. (strain BH72).